Here is a 179-residue protein sequence, read N- to C-terminus: Replication restart protein DnaT (179 aa).

The interval 156–179 is disordered; it reads GGLPKRDVNTVSEPDSQIPPGFRG.

The protein belongs to the DnaT family. Homooligomerizes. Interacts with PriB. Component of the replication restart primosome. Primosome assembly occurs via a 'hand-off' mechanism. PriA binds to replication forks, subsequently PriB then DnaT bind; DnaT then displaces ssDNA to generate the helicase loading substrate.

Its function is as follows. Involved in the restart of stalled replication forks, which reloads the replicative helicase on sites other than the origin of replication. Can function in multiple replication restart pathways. Displaces ssDNA from a PriB-ssDNA complex. Probably forms a spiral filament on ssDNA. The protein is Replication restart protein DnaT of Shigella dysenteriae serotype 1 (strain Sd197).